The following is a 181-amino-acid chain: Adenine phosphoribosyltransferase (181 aa).

This sequence belongs to the purine/pyrimidine phosphoribosyltransferase family. In terms of assembly, homodimer.

The protein resides in the cytoplasm. The enzyme catalyses AMP + diphosphate = 5-phospho-alpha-D-ribose 1-diphosphate + adenine. It participates in purine metabolism; AMP biosynthesis via salvage pathway; AMP from adenine: step 1/1. In terms of biological role, catalyzes a salvage reaction resulting in the formation of AMP, that is energically less costly than de novo synthesis. This chain is Adenine phosphoribosyltransferase, found in Shewanella woodyi (strain ATCC 51908 / MS32).